Reading from the N-terminus, the 114-residue chain is Macrophage migration inhibitory factor homolog (114 aa).

P2 acts as the Proton acceptor; via imino nitrogen in catalysis. K33 and N98 together coordinate substrate.

The protein belongs to the MIF family.

Its subcellular location is the secreted. It carries out the reaction L-dopachrome = 5,6-dihydroxyindole-2-carboxylate. The catalysed reaction is 3-phenylpyruvate = enol-phenylpyruvate. Functionally, tautomerization of the methyl ester of L-dopachrome. Inhibits migration of human peripheral blood mononuclear cells. The protein is Macrophage migration inhibitory factor homolog of Trichuris trichiura (Whipworm).